The primary structure comprises 224 residues: Phosphoribosylformylglycinamidine synthase subunit PurQ (224 aa).

The Glutamine amidotransferase type-1 domain maps to 4–224; that stretch reads RIGVVTFPGT…YSALDAVLTG (221 aa). The Nucleophile role is filled by Cys87. Catalysis depends on residues His195 and Glu197.

As to quaternary structure, part of the FGAM synthase complex composed of 1 PurL, 1 PurQ and 2 PurS subunits.

It localises to the cytoplasm. The enzyme catalyses N(2)-formyl-N(1)-(5-phospho-beta-D-ribosyl)glycinamide + L-glutamine + ATP + H2O = 2-formamido-N(1)-(5-O-phospho-beta-D-ribosyl)acetamidine + L-glutamate + ADP + phosphate + H(+). The catalysed reaction is L-glutamine + H2O = L-glutamate + NH4(+). It functions in the pathway purine metabolism; IMP biosynthesis via de novo pathway; 5-amino-1-(5-phospho-D-ribosyl)imidazole from N(2)-formyl-N(1)-(5-phospho-D-ribosyl)glycinamide: step 1/2. Functionally, part of the phosphoribosylformylglycinamidine synthase complex involved in the purines biosynthetic pathway. Catalyzes the ATP-dependent conversion of formylglycinamide ribonucleotide (FGAR) and glutamine to yield formylglycinamidine ribonucleotide (FGAM) and glutamate. The FGAM synthase complex is composed of three subunits. PurQ produces an ammonia molecule by converting glutamine to glutamate. PurL transfers the ammonia molecule to FGAR to form FGAM in an ATP-dependent manner. PurS interacts with PurQ and PurL and is thought to assist in the transfer of the ammonia molecule from PurQ to PurL. The sequence is that of Phosphoribosylformylglycinamidine synthase subunit PurQ from Mycobacterium bovis (strain ATCC BAA-935 / AF2122/97).